The following is a 179-amino-acid chain: SCAN domain-containing protein 1 (179 aa).

The tract at residues 1-108 (MAATEPILAA…GSRLGPETFR (108 aa)) is disordered. The segment covering 60–80 (AIPTPQAAASAAPELPLGPAP) has biased composition (low complexity). Positions 108 to 166 (RQRFRQFRYQDAAGPREAFRQLRELSRQWLRPDIRTKEQIVEMLVQEQLLAILPEAARA) constitute an SCAN box domain.

Interacts with ZNF202.

Its subcellular location is the nucleus. Its function is as follows. May regulate transcriptional activity. In Pongo pygmaeus (Bornean orangutan), this protein is SCAN domain-containing protein 1 (SCAND1).